The primary structure comprises 101 residues: Alkene monooxygenase system, effector subunit (101 aa).

It belongs to the TmoD/XamoD family. Monomer. The alkene monooxygenase multicomponent enzyme system is composed of an electron transfer component and a monooxygenase component interacting with the effector protein XamoD. The electron transfer component is composed of a ferredoxin reductase (XamoF) and a ferredoxin (XamoC), and the monooxygenase component is formed by a heterohexamer (dimer of heterotrimers) of two alpha subunits (XamoA), two beta subunits (XamoE) and two gamma subunits (XamoB).

It is found in the cytoplasm. Functionally, effector component of the alkene monooxygenase multicomponent enzyme system which catalyzes the O2- and NADH-dependent epoxidation of short chain (C2 to C6) alkenes to their corresponding epoxides. One possible role of this small protein might be to facilitate electron transfer between the reductase and ferredoxin components. The protein is Alkene monooxygenase system, effector subunit of Xanthobacter autotrophicus (strain ATCC BAA-1158 / Py2).